A 2897-amino-acid polypeptide reads, in one-letter code: Chromodomain-helicase-DNA-binding protein 9 (2897 aa).

Over residues 173 to 201 (QCTSLRSQQNRNNLNPGQNSLSQSKNFMN) the composition is skewed to polar residues. Disordered stretches follow at residues 173–265 (QCTS…CSVS), 482–525 (QRQP…KQEK), and 537–671 (AKER…SAPL). Lysine 197 is covalently cross-linked (Glycyl lysine isopeptide (Lys-Gly) (interchain with G-Cter in SUMO2)). A compositionally biased stretch (low complexity) spans 220–235 (SNSQQSISMQQFSQTS). Polar residues-rich tracts occupy residues 247–260 (HQEGNFNGPSPNMT) and 484–506 (QPPSSKKSDGSGTYTKLQNTQVR). The residue at position 499 (lysine 499) is an N6-acetyllysine. Basic and acidic residues predominate over residues 508–525 (MSEKKQRKKVESESKQEK). Phosphoserine is present on serine 550. The segment covering 573–593 (KPKDKDSKKTKTCSKLKEKTK) has biased composition (basic and acidic residues). Lysine 596 participates in a covalent cross-link: Glycyl lysine isopeptide (Lys-Gly) (interchain with G-Cter in SUMO2). Position 611 is a phosphoserine (serine 611). Positions 634–644 (RRSNRQIKRKK) are enriched in basic residues. Positions 645–660 (YAEDIEGKQSEEEVKG) are enriched in basic and acidic residues. 2 consecutive Chromo domains span residues 690–761 (AIVD…HFFA) and 773–839 (VEVD…RLDR). The LXXLL motif 1 motif lies at 868 to 872 (LNWLL). A Helicase ATP-binding domain is found at 872-1046 (LFNWYNRRNC…FSLLHFLEPL (175 aa)). 885-892 (DEMGLGKT) lines the ATP pocket. The DEAH box signature appears at 997–1000 (DEAH). Residues 1036-1040 (LFSLL) carry the LXXLL motif 2 motif. A Helicase C-terminal domain is found at 1186 to 1337 (LIDKLLPKMK…KAVLQSMSGR (152 aa)). A disordered region spans residues 1461–1484 (KDELAELSEAESEGDEKPKLRRPC). Over residues 1465–1474 (AELSEAESEG) the composition is skewed to acidic residues. A phosphoserine mark is found at serine 1468 and serine 1472. Residues 1475–1484 (DEKPKLRRPC) show a composition bias toward basic and acidic residues. Glycyl lysine isopeptide (Lys-Gly) (interchain with G-Cter in SUMO2) cross-links involve residues lysine 1588, lysine 1738, and lysine 1903. Serine 2026 carries the phosphoserine modification. Residues 2031–2035 (LPRLL) carry the LXXLL motif 3 motif. Lysine 2038 participates in a covalent cross-link: Glycyl lysine isopeptide (Lys-Gly) (interchain with G-Cter in SUMO2). 2 disordered regions span residues 2050–2238 (ENLK…QMNN) and 2305–2337 (GAATEYSDPSVPTPPGAGVKEEHDQSTQMSKVK). 2 positions are modified to phosphoserine: serine 2058 and serine 2059. Lysine 2074 is covalently cross-linked (Glycyl lysine isopeptide (Lys-Gly) (interchain with G-Cter in SUMO2)). Residues serine 2075 and serine 2079 each carry the phosphoserine modification. The span at 2094-2104 (SGGKCETDRRM) shows a compositional bias: basic and acidic residues. The segment covering 2141 to 2193 (SSCSSRSSSSSSSSSCSHSRSGSSSSSSSSCSSASSSSSSSTSSSSSSSSSSS) has biased composition (low complexity). A compositionally biased stretch (basic and acidic residues) spans 2203-2216 (AQKRESTTHMKAYD). Residues 2221-2238 (ASLSTTQDETQDSFQMNN) are compositionally biased toward polar residues. The interval 2332 to 2481 (QMSKVKKHVR…LSYTQPQGIP (150 aa)) is binds A/T-rich DNA. Residues lysine 2350, lysine 2356, and lysine 2361 each participate in a glycyl lysine isopeptide (Lys-Gly) (interchain with G-Cter in SUMO2) cross-link. The segment at 2429–2436 (KKRRGRRK) is a.T hook-like. An LXXLL motif 4 motif is present at residues 2721–2725 (LPNLL). Positions 2729-2777 (GLLTKPTESGTEDKKGSDSKESEGKTERTESQSSENGGENSVSSSPSTS) are disordered. Residues 2739–2758 (TEDKKGSDSKESEGKTERTE) show a composition bias toward basic and acidic residues. Residues 2759 to 2777 (SQSSENGGENSVSSSPSTS) are compositionally biased toward low complexity. The LXXLL motif 5 motif lies at 2793 to 2797 (LNPLL). A disordered region spans residues 2827-2897 (VQNKNSDLGS…SEDSDSSNED (71 aa)). Residues 2840–2857 (VEVKEEDSRIKDQEDKGG) show a composition bias toward basic and acidic residues. Residue lysine 2843 forms a Glycyl lysine isopeptide (Lys-Gly) (interchain with G-Cter in SUMO2) linkage. A compositionally biased stretch (low complexity) spans 2877 to 2888 (ASSGSDSTSSSS).

Belongs to the SNF2/RAD54 helicase family. As to quaternary structure, interacts with PPARA. Probably interacts with ESR1 and NR1I3. Post-translationally, phosphorylated on serine and tyrosine residues. Widely expressed at low levels. In bone marrow, expression is restricted to osteoprogenitor cells adjacent to mature osteoblasts.

The protein resides in the cytoplasm. It localises to the nucleus. It catalyses the reaction ATP + H2O = ADP + phosphate + H(+). In terms of biological role, probable ATP-dependent chromatin-remodeling factor. Acts as a transcriptional coactivator for PPARA and possibly other nuclear receptors. Has DNA-dependent ATPase activity and binds to A/T-rich DNA. Associates with A/T-rich regulatory regions in promoters of genes that participate in the differentiation of progenitors during osteogenesis. In Homo sapiens (Human), this protein is Chromodomain-helicase-DNA-binding protein 9 (CHD9).